Reading from the N-terminus, the 597-residue chain is MAQAWAFLLPVLVFGSYVTSLFFPSYISGPLCGGDGGGRSLFLCAQAPKDQDPSPAVSTMYKTAFHFQPAKNWMNDPSGPMYFNGFYHEFYQYNLNGPIFGDIVWGHSVSTDLVNWIGLEPALVRDTPSDIDGCWTGSVTILPGGKPVIIYTGGDKDQHQAQNIAFPKNRSDPYLREWIKAANNPVLRPDEPGMNSIEFRDPTTGWIGPDGLWRMAVGGELNGYSAALLYKSEDFLNWTKVDHPLYSHNGSNMWECPDFFAVLPGNNAGLDLSAAIPQGAKHALKMSVDSVDKYMIGVYDLQRDAFVPDNVVDDRRLWLRIDYGTFYASKSFFDSNKNRRIIWGWSRETDSPSDDLEKGWAGLHTIPRTIWLADNGKQLLQWPVEEIESLRTNEISHQGIELNKGDLFEIKEVDAFQADVEIGFELASIDDADPFDPSWLLDPEKHCGEAGASVPGGIGPFGLVILASDNMDEHTEVYFRVYKSQEKYMVLMCSDLRRSSLRPDLEKPAYGGFFEFDLEKERKISLRTLIDRSAVESFGGGGRVCITSRVYPAVLADVGRAHIYAFNNGSATVRVPQLSAWTMRKAQVNVEKGWSAI.

The signal sequence occupies residues 1-20; it reads MAQAWAFLLPVLVFGSYVTS. D76 is an active-site residue. N-linked (GlcNAc...) asparagine glycans are attached at residues N169, N237, and N249. A disulfide bridge connects residues C447 and C493. N568 carries N-linked (GlcNAc...) asparagine glycosylation.

The protein belongs to the glycosyl hydrolase 32 family.

The enzyme catalyses Hydrolysis of terminal, non-reducing (2-&gt;1)-linked beta-D-fructofuranose residues in fructans.. Its activity is regulated as follows. Inhibited by sucrose. In terms of biological role, hydrolyzes inulin-type beta-(2,1)-fructans and beta-(2,1)-linkages in branched fructans. Has low activity against beta-(2,6)-linked fructans. May play a role as a beta-(2,1)-trimmer during graminan biosynthesis. The sequence is that of Fructan 1-exohydrolase w1 from Triticum aestivum (Wheat).